The following is a 201-amino-acid chain: Peptidyl-tRNA hydrolase (201 aa).

Tyr-14 contacts tRNA. His-19 acts as the Proton acceptor in catalysis. Positions 64, 66, and 112 each coordinate tRNA.

It belongs to the PTH family. In terms of assembly, monomer.

Its subcellular location is the cytoplasm. The catalysed reaction is an N-acyl-L-alpha-aminoacyl-tRNA + H2O = an N-acyl-L-amino acid + a tRNA + H(+). Functionally, hydrolyzes ribosome-free peptidyl-tRNAs (with 1 or more amino acids incorporated), which drop off the ribosome during protein synthesis, or as a result of ribosome stalling. Its function is as follows. Catalyzes the release of premature peptidyl moieties from peptidyl-tRNA molecules trapped in stalled 50S ribosomal subunits, and thus maintains levels of free tRNAs and 50S ribosomes. This chain is Peptidyl-tRNA hydrolase, found in Rhodopseudomonas palustris (strain BisA53).